We begin with the raw amino-acid sequence, 76 residues long: Zinc finger protein 706 (76 aa).

Residues Met1 to Lys13 show a composition bias toward low complexity. Disordered regions lie at residues Met1–Ala32 and Thr53–Ala76. Basic and acidic residues-rich tracts occupy residues Lys17–Ala31 and Thr53–His62. The C2H2-type zinc finger occupies Tyr39–His62.

The protein localises to the cytoplasm. The protein resides in the nucleus. In terms of biological role, transcription repressor involved in the exit of embryonic stem cells (ESCs) from self-renewal. The protein is Zinc finger protein 706 of Gallus gallus (Chicken).